Reading from the N-terminus, the 108-residue chain is uncharacterized protein (108 aa).

Transmembrane regions (helical) follow at residues 10–32 (SLCY…FVVN), 45–67 (ISHI…GAVA), and 77–99 (FVII…WNVI).

It localises to the cell membrane. This is an uncharacterized protein from Bacillus subtilis (strain 168).